The sequence spans 511 residues: Bifunctional purine biosynthesis protein PurH (511 aa).

Residues 1 to 146 (MTKRALVSVS…KNHADVTVVV (146 aa)) enclose the MGS-like domain.

The protein belongs to the PurH family.

It carries out the reaction (6R)-10-formyltetrahydrofolate + 5-amino-1-(5-phospho-beta-D-ribosyl)imidazole-4-carboxamide = 5-formamido-1-(5-phospho-D-ribosyl)imidazole-4-carboxamide + (6S)-5,6,7,8-tetrahydrofolate. The enzyme catalyses IMP + H2O = 5-formamido-1-(5-phospho-D-ribosyl)imidazole-4-carboxamide. It functions in the pathway purine metabolism; IMP biosynthesis via de novo pathway; 5-formamido-1-(5-phospho-D-ribosyl)imidazole-4-carboxamide from 5-amino-1-(5-phospho-D-ribosyl)imidazole-4-carboxamide (10-formyl THF route): step 1/1. It participates in purine metabolism; IMP biosynthesis via de novo pathway; IMP from 5-formamido-1-(5-phospho-D-ribosyl)imidazole-4-carboxamide: step 1/1. The chain is Bifunctional purine biosynthesis protein PurH from Shouchella clausii (strain KSM-K16) (Alkalihalobacillus clausii).